Here is a 389-residue protein sequence, read N- to C-terminus: Type 2 DNA topoisomerase 6 subunit A (389 aa).

A Topo IIA-type catalytic domain is found at 12-162; the sequence is EARRKAANIL…MLILSKEKGK (151 aa). Tyr-106 serves as the catalytic O-(5'-phospho-DNA)-tyrosine intermediate. Positions 209 and 261 each coordinate Mg(2+).

This sequence belongs to the TOP6A family. Homodimer. Heterotetramer of two Top6A and two Top6B chains. It depends on Mg(2+) as a cofactor.

The enzyme catalyses ATP-dependent breakage, passage and rejoining of double-stranded DNA.. Not inhibited by the DNA gyrase inhibitor novobiocin, instead inhibited by eukaryotic topoisomerase inhibitors such as m- and o-amsacrine, ellipticine, and the quinolone CP-115,953. Its function is as follows. Relaxes both positive and negative supercoils and exhibits a strong decatenase and unknotting activity; it cannot introduce DNA supercoils. ATP is absolutely required for DNA cleavage; the nonhydrolyzable analog AMP-PNP generates nicked or linear products from a supercoiled dsDNA substrate. Generates staggered two-nucleotide long 5' overhangs. The enzyme is covalently attached transiently to the 5'-ends of the cleaved strands. The sequence is that of Type 2 DNA topoisomerase 6 subunit A from Saccharolobus shibatae (strain ATCC 51178 / DSM 5389 / JCM 8931 / NBRC 15437 / B12) (Sulfolobus shibatae).